A 1023-amino-acid polypeptide reads, in one-letter code: Transmembrane protein 132A (1023 aa).

The signal sequence occupies residues 1-35 (MCARMAGRTTAAPRGPYGPWLCLLVALALDVVRVD). The Extracellular portion of the chain corresponds to 36-852 (CGQAPLDPVY…VTELELGMYA (817 aa)). The disordered stretch occupies residues 212 to 246 (AAEGPGGCGSGEENDPGEQALPVGGVELRPADPPQ). Residue Asn280 is glycosylated (N-linked (GlcNAc...) asparagine). Disordered stretches follow at residues 512-533 (WRVPGPAEGPAEPAAEASDEAE) and 766-839 (LPPA…MVPA). Low complexity predominate over residues 515–527 (PGPAEGPAEPAAE). At Ser529 the chain carries Phosphoserine; by FAM20C. Residues 611–916 (IEVRSPLSDS…RQLDRQSPGP (306 aa)) are binds to HSPA5/GRP78. The tract at residues 671–1023 (LPAPKQEVAL…NYMERIRGSS (353 aa)) is confers cellular localization similar to full-length form. Low complexity predominate over residues 778–790 (SSPAWSPPATEAT). Positions 809–823 (GKFERAEEEARKEET) are enriched in basic and acidic residues. Over residues 824–836 (EAREEEEEEEEEM) the composition is skewed to acidic residues. A helical transmembrane segment spans residues 853–873 (LLGVFCVAIFIFLVNGVVFVL). Topologically, residues 874–1023 (RYQRKEPPDS…NYMERIRGSS (150 aa)) are cytoplasmic. Residues 905 to 961 (LSRQLDRQSPGPPKGEGSCPCESGGGGEAPTLAPGPPGGTTSSSSTLARKEAGGRRK) form a disordered region.

The protein belongs to the TMEM132 family. Interacts with HSPA5/GRP78.

It localises to the golgi apparatus membrane. The protein resides in the endoplasmic reticulum membrane. May play a role in embryonic and postnatal development of the brain. Increased resistance to cell death induced by serum starvation in cultured cells. Regulates cAMP-induced GFAP gene expression via STAT3 phosphorylation. This chain is Transmembrane protein 132A (TMEM132A), found in Homo sapiens (Human).